The following is a 979-amino-acid chain: UPF0182 protein Rv0064 (979 aa).

Transmembrane regions (helical) follow at residues L19–V41, L63–Y85, L114–V136, W174–L196, A208–L230, L261–L280, and I285–L307. Residues G898–A948 are disordered. A compositionally biased stretch (pro residues) spans A913 to P946.

It belongs to the UPF0182 family.

It is found in the cell membrane. The protein is UPF0182 protein Rv0064 of Mycobacterium tuberculosis (strain ATCC 25618 / H37Rv).